Reading from the N-terminus, the 461-residue chain is MTALFQQLPSVDKILKTPQGLQLITEFGHTAVVATCRELLTQARQFIKKNNQLPEYFSNFDRTFLEIHSHLQKQNQVQIKAVHNLTGTVLHTNLGRALWSEAAQQAALSAMQKNVSLEYDLDEGKRSHRDNYISELLCKLTGAEAACIVNNNAAAVLLMLATFAQGKEVIISRGELIEIGGAFRIPDIMEQAGCHLVEVGTTNRTHLKDYRNAITENTAFLMKVHSSNYQICGFTSSVSEEELTELGQEMNVPVVTDLGSGALVDLSQYGLPKEPTVQEKIAQGVDLVSFSGDKLLGGVQAGIIVGKKEWIEQLQAHPLKRVLRCDKVILAGLEATLRLYLNPEKLTEKLPTLRLLTQPLKQLKINAMRLKERLESRLNSQFELQIEASQAQIGSGSQPMERIPSVAVTIAEKTNAKLSALSARFKQLSQPIIGRMENGKIWLDLRSLADIETLLNTLDEL.

The residue at position 294 (Lys-294) is an N6-(pyridoxal phosphate)lysine.

Belongs to the SelA family. Pyridoxal 5'-phosphate is required as a cofactor.

It is found in the cytoplasm. It carries out the reaction L-seryl-tRNA(Sec) + selenophosphate + H(+) = L-selenocysteinyl-tRNA(Sec) + phosphate. It participates in aminoacyl-tRNA biosynthesis; selenocysteinyl-tRNA(Sec) biosynthesis; selenocysteinyl-tRNA(Sec) from L-seryl-tRNA(Sec) (bacterial route): step 1/1. Its function is as follows. Converts seryl-tRNA(Sec) to selenocysteinyl-tRNA(Sec) required for selenoprotein biosynthesis. In Haemophilus influenzae (strain ATCC 51907 / DSM 11121 / KW20 / Rd), this protein is L-seryl-tRNA(Sec) selenium transferase.